A 140-amino-acid chain; its full sequence is ATP synthase epsilon chain (140 aa).

The protein belongs to the ATPase epsilon chain family. In terms of assembly, F-type ATPases have 2 components, CF(1) - the catalytic core - and CF(0) - the membrane proton channel. CF(1) has five subunits: alpha(3), beta(3), gamma(1), delta(1), epsilon(1). CF(0) has three main subunits: a, b and c.

The protein resides in the cell inner membrane. Its function is as follows. Produces ATP from ADP in the presence of a proton gradient across the membrane. This chain is ATP synthase epsilon chain, found in Neisseria meningitidis serogroup C (strain 053442).